The primary structure comprises 149 residues: Globin (149 aa).

The Globin domain maps to 2–149; sequence VLTKDEFDSL…KIFTGVAGQL (148 aa). Position 100 (His-100) interacts with heme.

It belongs to the globin family. In terms of assembly, monomer.

In terms of biological role, oxygen binding protein. This chain is Globin, found in Isoparorchis hypselobagri (Giant trematode).